A 1951-amino-acid chain; its full sequence is Sodium channel protein type 3 subunit alpha (1951 aa).

At 1-128 (MAQALLVPPG…KIAIKILVHS (128 aa)) the chain is on the cytoplasmic side. The interval 28–60 (RAAEEKAKKPKKEQDIDDENKPKPNSDLEAGKN) is disordered. Residues 46-57 (ENKPKPNSDLEA) show a composition bias toward basic and acidic residues. One copy of the I repeat lies at 110–455 (ILTPLNPVRK…QQMLEQLKKQ (346 aa)). A helical membrane pass occupies residues 129 to 146 (LFSMLIMCTILTNCVFMT). The Extracellular segment spans residues 147–152 (LSNPPD). Residues 153–174 (WTKNVEYTFTGIYTFESLIKIL) form a helical membrane-spanning segment. Topologically, residues 175-188 (ARGFCLEDFTFLRD) are cytoplasmic. Residues 189 to 206 (PWNWLDFSVIVMAYVTEF) form a helical membrane-spanning segment. Residues 207–213 (VDLGNVS) are Extracellular-facing. A glycan (N-linked (GlcNAc...) asparagine) is linked at asparagine 211. Residues 214–235 (ALRTFRVLRALKTISVIPGLKT) form a helical membrane-spanning segment. The Cytoplasmic segment spans residues 236 to 249 (IVGALIQSVKKLSD). Residues 250 to 269 (VMILTVFCLSVFALIGLQLF) form a helical membrane-spanning segment. The Extracellular portion of the chain corresponds to 270–369 (MGNLRNKCSQ…NYGYTSFDTF (100 aa)). N-linked (GlcNAc...) asparagine glycosylation is found at asparagine 290, asparagine 296, asparagine 302, asparagine 307, and asparagine 339. The pore-forming intramembrane region spans 370–386 (SWAFLSLFRLMTQDYWE). Residues 387–397 (NLYQLTLRAAG) lie on the Extracellular side of the membrane. The chain crosses the membrane as a helical span at residues 398–424 (KTYMIFFVLVIFLGSFYLVNLILAVVA). Residues 425–712 (MAYEEQNQAT…LVNLIVMDPF (288 aa)) are Cytoplasmic-facing. Residues serine 484, serine 485, and serine 486 each carry the phosphoserine modification. Disordered regions lie at residues 493–529 (SKSAKEWRNRRKKRRQREHLEGNHRADGDRFPKSESE) and 587–633 (VGSE…TEVR). Residues 500–509 (RNRRKKRRQR) are compositionally biased toward basic residues. Basic and acidic residues-rich tracts occupy residues 510 to 529 (EHLEGNHRADGDRFPKSESE) and 596 to 622 (DEHSTFEDSESRRDSLFVPHRPGERRN). Residues 693–965 (CCDAWLKVKH…QIAVGRMQKG (273 aa)) form an II repeat. The chain crosses the membrane as a helical span at residues 713–730 (VDLAITICIVLNTLFMAM). Residues 731–738 (EHYPMTQQ) are Extracellular-facing. The helical transmembrane segment at 739–763 (FSSVLTVGNLVFTGIFTAEMVLKII) threads the bilayer. Residues 764-773 (AMDPYYYFQE) are Cytoplasmic-facing. Residues 774–793 (GWNIFDGIIVSLSLMELGLA) form a helical membrane-spanning segment. Residues 794 to 797 (NVEG) lie on the Extracellular side of the membrane. Residues 798–816 (LSVLRSFRLLRVFKLAKSW) form a helical membrane-spanning segment. At 817–834 (PTLNMLIKIIGNSVGALG) the chain is on the cytoplasmic side. A helical membrane pass occupies residues 835-855 (NLTLVLAIIVFIFAVVGMQLF). At 856–880 (GKSYKECVCKINVDCKLPRWHMNDF) the chain is on the extracellular side. Cysteine 864 and cysteine 870 form a disulfide bridge. Residues 881 to 896 (FHSFLIVFRVLCGEWI) constitute an intramembrane region (pore-forming). Topologically, residues 897-907 (ETMWDCMEVAG) are extracellular. Cysteine 902 and cysteine 911 are disulfide-bonded. Residues 908–934 (QTMCLIVFMLVMVIGNLVVLNLFLALL) form a helical membrane-spanning segment. Residues 935–1156 (LSSFSSDNLA…RKTCYSIVEH (222 aa)) are Cytoplasmic-facing. The tract at residues 1068–1112 (TEEFSSESELEESKEKLNATSSSEGSTVDVAPPREGEQAEIEPEE) is disordered. An III repeat occupies 1139 to 1450 (KGKIWWNLRK…KKYYNAMKKL (312 aa)). The chain crosses the membrane as a helical span at residues 1157 to 1177 (NWFETFIVFMILLSSGALAFE). Residues 1178–1189 (DIYIEQRKTIKT) are Extracellular-facing. A helical transmembrane segment spans residues 1190 to 1211 (MLEYADKVFTYIFILEMLLKWV). Over 1212–1217 (AYGFQT) the chain is Cytoplasmic. Residues 1218 to 1243 (YFTNAWCWLDFLIVDVSLVSLVANAL) traverse the membrane as a helical segment. Over 1244–1252 (GYSELGAIK) the chain is Extracellular. A helical membrane pass occupies residues 1253 to 1271 (SLRTLRALRPLRALSRFEG). Over 1272–1284 (MRVVVNALVGAIP) the chain is Cytoplasmic. A helical transmembrane segment spans residues 1285–1307 (SIMNVLLVCLIFWLIFSIMGVNL). The Extracellular segment spans residues 1308 to 1353 (FAGKFYHCVNTTTGNMFEIKEVNNFSDCQALGKQARWKNVKVNFDN). Cysteine 1315 and cysteine 1335 form a disulfide bridge. Residues asparagine 1317 and asparagine 1331 are each glycosylated (N-linked (GlcNAc...) asparagine). An intramembrane region (pore-forming) is located at residues 1354-1370 (VGAGYLALLQVATFKGW). Topologically, residues 1371–1393 (MDIMYAAVDSRDVKLQPIYEENL) are extracellular. Residues 1394–1419 (YMYLYFVIFIIFGSFFTLNLFIGVII) form a helical membrane-spanning segment. At 1420–1477 (DNFNQQKKKFGGQDIFMTEEQKKYYNAMKKLGSKKPQKPIPRPANKFQGMVFDFVTRQ) the chain is on the cytoplasmic side. Phosphoserine; by PKC is present on serine 1452. The IV repeat unit spans residues 1459–1757 (IPRPANKFQG…WEKFDPDATQ (299 aa)). The chain crosses the membrane as a helical span at residues 1478-1496 (VFDISIMILICLNMVTMMV). The Extracellular segment spans residues 1497 to 1504 (ETDDQSKY). The chain crosses the membrane as a helical span at residues 1505–1528 (MTLVLSRINLVFIVLFTGEFLLKL). Residues 1529–1538 (ISLRYYYFTI) lie on the Cytoplasmic side of the membrane. The chain crosses the membrane as a helical span at residues 1539 to 1556 (GWNIFDFVVVILSIVGMF). The Extracellular segment spans residues 1557-1568 (LAELIEKYFVSP). The helical transmembrane segment at 1569 to 1591 (TLFRVIRLARIGRILRLIKGAKG) threads the bilayer. The Cytoplasmic segment spans residues 1592–1604 (IRTLLFALMMSLP). The chain crosses the membrane as a helical span at residues 1605-1628 (ALFNIGLLLFLVMFIYAIFGMSNF). The Extracellular portion of the chain corresponds to 1629-1650 (AYVKKEAGIDDMFNFETFGNSM). An intramembrane region (pore-forming) is located at residues 1651 to 1663 (ICLFQITTSAGWD). The Extracellular portion of the chain corresponds to 1664 to 1695 (GLLAPILNSAPPDCDPDAIHPGSSVKGDCGNP). A helical transmembrane segment spans residues 1696-1721 (SVGIFFFVSYIIISFLVVVNMYIAVI). The Cytoplasmic segment spans residues 1722–1951 (LENFSVATEE…KGKEVRENQK (230 aa)). One can recognise an IQ domain in the interval 1851 to 1880 (EEVSAAIIQRNYRCYLLKQRLKNISSKYDK). Residues 1898–1951 (DKLNGNSTPEKTDGSSSTTSPPSYDSVTKPDKEKFEKDKPEKEIKGKEVRENQK) form a disordered region. A compositionally biased stretch (basic and acidic residues) spans 1925-1951 (TKPDKEKFEKDKPEKEIKGKEVRENQK).

This sequence belongs to the sodium channel (TC 1.A.1.10) family. Nav1.3/SCN3A subfamily. As to quaternary structure, heterooligomer of an alpha subunit, SCN3A, and 1 to 3 regulatory beta subunits including SCN1B and SCN2B; disulfide-linked with some beta subunits like SCN2B. Interacts with NEDD4L; could regulate expression of SCN3A at the plasma membrane through ubiquitination-regulated endocytosis. Interacts with the conotoxin GVIIJ. Interacts with the spider beta/delta-theraphotoxin-Pre1a. Interacts with the spider RTX-VII toxin (AC P0DL75). Post-translationally, may be ubiquitinated by NEDD4L; which would promote its endocytosis. Phosphorylation at Ser-1452 by PKC in a highly conserved cytoplasmic loop slows inactivation of the sodium channel and reduces peak sodium currents.

Its subcellular location is the cell membrane. The protein resides in the basal cell membrane. The catalysed reaction is Na(+)(in) = Na(+)(out). In terms of biological role, pore-forming subunit of Nav1.3, a voltage-gated sodium (Nav) channel that directly mediates the depolarizing phase of action potentials in excitable membranes. Navs, also called VGSCs (voltage-gated sodium channels) or VDSCs (voltage-dependent sodium channels), operate by switching between closed and open conformations depending on the voltage difference across the membrane. In the open conformation they allow Na(+) ions to selectively pass through the pore, along their electrochemical gradient. The influx of Na+ ions provokes membrane depolarization, initiating the propagation of electrical signals throughout cells and tissues. In some secretory cell types, it also participates in cell excitability through membrane depolarization and regulates cells responsiveness to stimuli triggering secretion. For instance, it controls the release of serotonin/5-hydroxytryptamine by enterochromaffin cells and is required for both glucagon- and glucose-induced insulin secretion in pancreatic endocrine cells. This is Sodium channel protein type 3 subunit alpha from Rattus norvegicus (Rat).